A 97-amino-acid chain; its full sequence is Large ribosomal subunit protein uL23 (97 aa).

It belongs to the universal ribosomal protein uL23 family. As to quaternary structure, part of the 50S ribosomal subunit. Contacts protein L29, and trigger factor when it is bound to the ribosome.

Functionally, one of the early assembly proteins it binds 23S rRNA. One of the proteins that surrounds the polypeptide exit tunnel on the outside of the ribosome. Forms the main docking site for trigger factor binding to the ribosome. The polypeptide is Large ribosomal subunit protein uL23 (Rhizobium etli (strain CIAT 652)).